The primary structure comprises 248 residues: uncharacterized protein (248 aa).

Residues 7–246 (VQLSNLSWTF…PASTILLPTS (240 aa)) form the ABC transporter domain. 43 to 50 (GQSGSGKS) contacts ATP.

This sequence belongs to the ABC transporter superfamily.

This is an uncharacterized protein from Mycobacterium tuberculosis (strain CDC 1551 / Oshkosh).